The sequence spans 205 residues: Proteasome subunit beta type-3 (205 aa).

This sequence belongs to the peptidase T1B family. In terms of assembly, the 26S proteasome consists of a 20S proteasome core and two 19S regulatory subunits. The 20S proteasome core is composed of 28 subunits that are arranged in four stacked rings, resulting in a barrel-shaped structure. The two end rings are each formed by seven alpha subunits, and the two central rings are each formed by seven beta subunits. The catalytic chamber with the active sites is on the inside of the barrel.

It localises to the cytoplasm. It is found in the nucleus. Its function is as follows. Non-catalytic component of the proteasome, a multicatalytic proteinase complex which is characterized by its ability to cleave peptides with Arg, Phe, Tyr, Leu, and Glu adjacent to the leaving group at neutral or slightly basic pH. The proteasome has an ATP-dependent proteolytic activity. This chain is Proteasome subunit beta type-3, found in Drosophila melanogaster (Fruit fly).